Reading from the N-terminus, the 348-residue chain is uncharacterized protein (348 aa).

This is an uncharacterized protein from Caenorhabditis elegans.